A 617-amino-acid polypeptide reads, in one-letter code: V-type proton ATPase catalytic subunit A (617 aa).

Threonine 136 is subject to Phosphothreonine. 250–257 (GAFGCGKT) is a binding site for ATP. Residue serine 384 is modified to Phosphoserine; by AMPK.

The protein belongs to the ATPase alpha/beta chains family. V-ATPase is a heteromultimeric enzyme made up of two complexes: the ATP-hydrolytic V1 complex and the proton translocation V0 complex. The V1 complex consists of three catalytic AB heterodimers that form a heterohexamer, three peripheral stalks each consisting of EG heterodimers, one central rotor including subunits D and F, and the regulatory subunits C and H. The proton translocation complex V0 consists of the proton transport subunit a, a ring of proteolipid subunits c9c'', rotary subunit d, subunits e and f, and the accessory subunits ATP6AP1/Ac45 and ATP6AP2/PRR. Interacts with the V0 complex V-ATPase subunit a4 ATP6V0A4. Interacts with WFS1. Interacts with alpha-crystallin B chain/CRYAB and with MTOR, forming a ternary complex. Post-translationally, phosphorylation at Ser-384 by AMPK down-regulates its enzyme activity.

The protein localises to the cytoplasm. The protein resides in the cytosol. Its subcellular location is the cytoplasmic vesicle. It localises to the secretory vesicle. It is found in the clathrin-coated vesicle membrane. The protein localises to the lysosome. The enzyme catalyses ATP + H2O + 4 H(+)(in) = ADP + phosphate + 5 H(+)(out). With respect to regulation, ATP hydrolysis occurs at the interface between the nucleotide-binding domains of subunits A and B. ATP hydrolysis triggers a conformational change in the subunits D and F, which induces a shift of subunit d. The c-ring is subsequently rotated and results in a continuous proton translocation across the membrane. Its function is as follows. Catalytic subunit of the V1 complex of vacuolar(H+)-ATPase (V-ATPase), a multisubunit enzyme composed of a peripheral complex (V1) that hydrolyzes ATP and a membrane integral complex (V0) that translocates protons. V-ATPase is responsible for acidifying and maintaining the pH of intracellular compartments and in some cell types, is targeted to the plasma membrane, where it is responsible for acidifying the extracellular environment. In aerobic conditions, involved in intracellular iron homeostasis, thus triggering the activity of Fe(2+) prolyl hydroxylase (PHD) enzymes, and leading to HIF1A hydroxylation and subsequent proteasomal degradation. May play a role in neurite development and synaptic connectivity. The polypeptide is V-type proton ATPase catalytic subunit A (ATP6V1A) (Pongo abelii (Sumatran orangutan)).